Reading from the N-terminus, the 602-residue chain is Elongation factor 4 (602 aa).

Residues 7-189 (KYIRNFSIVA…AIVNKVPAPE (183 aa)) form the tr-type G domain. Residues 19–24 (DHGKST) and 136–139 (NKID) each bind GTP.

It belongs to the TRAFAC class translation factor GTPase superfamily. Classic translation factor GTPase family. LepA subfamily.

The protein resides in the cell membrane. The catalysed reaction is GTP + H2O = GDP + phosphate + H(+). Functionally, required for accurate and efficient protein synthesis under certain stress conditions. May act as a fidelity factor of the translation reaction, by catalyzing a one-codon backward translocation of tRNAs on improperly translocated ribosomes. Back-translocation proceeds from a post-translocation (POST) complex to a pre-translocation (PRE) complex, thus giving elongation factor G a second chance to translocate the tRNAs correctly. Binds to ribosomes in a GTP-dependent manner. This is Elongation factor 4 from Clostridium botulinum (strain Okra / Type B1).